Here is an 809-residue protein sequence, read N- to C-terminus: ATP-dependent zinc metalloprotease FTSH 3, mitochondrial (809 aa).

A mitochondrion-targeting transit peptide spans 1–83; sequence MTMIFFSKLN…FANPRLRRFF (83 aa). The segment covering 93–121 has biased composition (basic and acidic residues); that stretch reads YENYFPKDKQEPKSDQKSEHKEGSEKNEN. Residues 93 to 122 form a disordered region; the sequence is YENYFPKDKQEPKSDQKSEHKEGSEKNENE. Residues 132–152 form a helical membrane-spanning segment; sequence FQNLLIPLLALAVFFSTFSFG. 362–369 is a binding site for ATP; that stretch reads GPPGTGKT. Residue His586 participates in Zn(2+) binding. Glu587 is an active-site residue. Zn(2+) contacts are provided by His590 and Asp662. Residues 776 to 809 are disordered; sequence GFEETEKDSAATPTVEPVVDDGAPPPFEPQVVPT.

The protein in the N-terminal section; belongs to the AAA ATPase family. It in the C-terminal section; belongs to the peptidase M41 family. It depends on Zn(2+) as a cofactor.

Its subcellular location is the mitochondrion inner membrane. Functionally, probable ATP-dependent zinc metallopeptidase. Involved in the assembly and/or stability of the complexes I and V of the mitochondrial oxidative phosphorylation system. In Arabidopsis thaliana (Mouse-ear cress), this protein is ATP-dependent zinc metalloprotease FTSH 3, mitochondrial (FTSH3).